We begin with the raw amino-acid sequence, 109 residues long: Iron-sulfur assembly protein IscA-like 3, mitochondrial (109 aa).

Residues methionine 1–glutamine 18 constitute a mitochondrion transit peptide. Residues cysteine 37, cysteine 100, and cysteine 102 each coordinate Fe cation.

It belongs to the HesB/IscA family. In terms of assembly, homodimer; may form tetramers and higher multimers. Requires Fe cation as cofactor.

The protein localises to the mitochondrion. Involved in the assembly of mitochondrial iron-sulfur proteins. Probably involved in the binding of an intermediate of Fe/S cluster assembly. The chain is Iron-sulfur assembly protein IscA-like 3, mitochondrial from Arabidopsis thaliana (Mouse-ear cress).